The following is a 122-amino-acid chain: Large ribosomal subunit protein uL14 (122 aa).

Belongs to the universal ribosomal protein uL14 family. As to quaternary structure, part of the 50S ribosomal subunit. Forms a cluster with proteins L3 and L19. In the 70S ribosome, L14 and L19 interact and together make contacts with the 16S rRNA in bridges B5 and B8.

In terms of biological role, binds to 23S rRNA. Forms part of two intersubunit bridges in the 70S ribosome. The chain is Large ribosomal subunit protein uL14 from Caldanaerobacter subterraneus subsp. tengcongensis (strain DSM 15242 / JCM 11007 / NBRC 100824 / MB4) (Thermoanaerobacter tengcongensis).